Reading from the N-terminus, the 298-residue chain is Phosphatidylserine decarboxylase proenzyme (298 aa).

Residues aspartate 113, histidine 169, and serine 256 each act as charge relay system; for autoendoproteolytic cleavage activity in the active site. The Schiff-base intermediate with substrate; via pyruvic acid; for decarboxylase activity role is filled by serine 256. The residue at position 256 (serine 256) is a Pyruvic acid (Ser); by autocatalysis.

Belongs to the phosphatidylserine decarboxylase family. PSD-B subfamily. Prokaryotic type II sub-subfamily. Heterodimer of a large membrane-associated beta subunit and a small pyruvoyl-containing alpha subunit. It depends on pyruvate as a cofactor. In terms of processing, is synthesized initially as an inactive proenzyme. Formation of the active enzyme involves a self-maturation process in which the active site pyruvoyl group is generated from an internal serine residue via an autocatalytic post-translational modification. Two non-identical subunits are generated from the proenzyme in this reaction, and the pyruvate is formed at the N-terminus of the alpha chain, which is derived from the carboxyl end of the proenzyme. The autoendoproteolytic cleavage occurs by a canonical serine protease mechanism, in which the side chain hydroxyl group of the serine supplies its oxygen atom to form the C-terminus of the beta chain, while the remainder of the serine residue undergoes an oxidative deamination to produce ammonia and the pyruvoyl prosthetic group on the alpha chain. During this reaction, the Ser that is part of the protease active site of the proenzyme becomes the pyruvoyl prosthetic group, which constitutes an essential element of the active site of the mature decarboxylase.

The protein resides in the cell membrane. It catalyses the reaction a 1,2-diacyl-sn-glycero-3-phospho-L-serine + H(+) = a 1,2-diacyl-sn-glycero-3-phosphoethanolamine + CO2. It functions in the pathway phospholipid metabolism; phosphatidylethanolamine biosynthesis; phosphatidylethanolamine from CDP-diacylglycerol: step 2/2. Functionally, catalyzes the formation of phosphatidylethanolamine (PtdEtn) from phosphatidylserine (PtdSer). In Desulfitobacterium hafniense (strain Y51), this protein is Phosphatidylserine decarboxylase proenzyme.